We begin with the raw amino-acid sequence, 430 residues long: 3-phosphoshikimate 1-carboxyvinyltransferase (430 aa).

The 3-phosphoshikimate site is built by Lys-33, Ser-34, and Arg-38. Lys-33 is a phosphoenolpyruvate binding site. Positions 101 and 129 each coordinate phosphoenolpyruvate. Residues Ser-172, Ser-173, Gln-174, Ser-201, Glu-319, and His-346 each contribute to the 3-phosphoshikimate site. Gln-174 contacts phosphoenolpyruvate. Residue Glu-319 is the Proton acceptor of the active site. Positions 350, 391, and 416 each coordinate phosphoenolpyruvate.

This sequence belongs to the EPSP synthase family. Monomer.

It localises to the cytoplasm. The catalysed reaction is 3-phosphoshikimate + phosphoenolpyruvate = 5-O-(1-carboxyvinyl)-3-phosphoshikimate + phosphate. It participates in metabolic intermediate biosynthesis; chorismate biosynthesis; chorismate from D-erythrose 4-phosphate and phosphoenolpyruvate: step 6/7. Functionally, catalyzes the transfer of the enolpyruvyl moiety of phosphoenolpyruvate (PEP) to the 5-hydroxyl of shikimate-3-phosphate (S3P) to produce enolpyruvyl shikimate-3-phosphate and inorganic phosphate. In Corynebacterium glutamicum (strain R), this protein is 3-phosphoshikimate 1-carboxyvinyltransferase.